A 198-amino-acid polypeptide reads, in one-letter code: Probable GTP-binding protein EngB (198 aa).

Residues 22–195 (DLPEIALAGR…WKAIHKMTKT (174 aa)) form the EngB-type G domain. GTP contacts are provided by residues 30-37 (GRSNVGKS), 57-61 (GKTQT), 75-78 (DVPG), 142-145 (TKAD), and 174-176 (FSS). Serine 37 and threonine 59 together coordinate Mg(2+).

The protein belongs to the TRAFAC class TrmE-Era-EngA-EngB-Septin-like GTPase superfamily. EngB GTPase family. The cofactor is Mg(2+).

In terms of biological role, necessary for normal cell division and for the maintenance of normal septation. The sequence is that of Probable GTP-binding protein EngB from Bacillus mycoides (strain KBAB4) (Bacillus weihenstephanensis).